The sequence spans 198 residues: Protein GrpE (198 aa).

This sequence belongs to the GrpE family. As to quaternary structure, homodimer.

The protein localises to the cytoplasm. Its function is as follows. Participates actively in the response to hyperosmotic and heat shock by preventing the aggregation of stress-denatured proteins, in association with DnaK and GrpE. It is the nucleotide exchange factor for DnaK and may function as a thermosensor. Unfolded proteins bind initially to DnaJ; upon interaction with the DnaJ-bound protein, DnaK hydrolyzes its bound ATP, resulting in the formation of a stable complex. GrpE releases ADP from DnaK; ATP binding to DnaK triggers the release of the substrate protein, thus completing the reaction cycle. Several rounds of ATP-dependent interactions between DnaJ, DnaK and GrpE are required for fully efficient folding. The polypeptide is Protein GrpE (Actinobacillus pleuropneumoniae serotype 3 (strain JL03)).